The primary structure comprises 736 residues: Eukaryotic translation initiation factor 3 subunit B (736 aa).

The tract at residues 1-94 (MAAVFDDIRL…LFIEFEDAGA (94 aa)) is sufficient for interaction with HCR1 and TIF32. The interval 1–219 (MAAVFDDIRL…GIASWGGPQF (219 aa)) is sufficient for interaction with PIC8. One can recognise an RRM domain in the interval 37–120 (RYVVVDGAPV…HRLWVNGLDD (84 aa)). 10 WD repeats span residues 140–182 (EFEA…PENV), 186–224 (RRNW…RLRR), 226–244 (AHPD…YLVT), 245–284 (FSSE…CVKT), 288–328 (PPQQ…QLLG), 332–375 (MKIE…QSCK), 443–483 (EIKD…VSFY), 511–557 (AIDG…TEKI), 566–604 (ATLR…KAEN), and 616–662 (VREE…QDAM).

Belongs to the eIF-3 subunit B family. As to quaternary structure, component of the eukaryotic translation initiation factor 3 (eIF-3) complex.

It is found in the cytoplasm. Functionally, RNA-binding component of the eukaryotic translation initiation factor 3 (eIF-3) complex, which is involved in protein synthesis of a specialized repertoire of mRNAs and, together with other initiation factors, stimulates binding of mRNA and methionyl-tRNAi to the 40S ribosome. The eIF-3 complex specifically targets and initiates translation of a subset of mRNAs involved in cell proliferation. The protein is Eukaryotic translation initiation factor 3 subunit B of Eremothecium gossypii (strain ATCC 10895 / CBS 109.51 / FGSC 9923 / NRRL Y-1056) (Yeast).